Here is a 226-residue protein sequence, read N- to C-terminus: Endonuclease V (226 aa).

Residues Asp43 and Asp111 each contribute to the Mg(2+) site.

It belongs to the endonuclease V family. The cofactor is Mg(2+).

It localises to the cytoplasm. It carries out the reaction Endonucleolytic cleavage at apurinic or apyrimidinic sites to products with a 5'-phosphate.. In terms of biological role, DNA repair enzyme involved in the repair of deaminated bases. Selectively cleaves double-stranded DNA at the second phosphodiester bond 3' to a deoxyinosine leaving behind the intact lesion on the nicked DNA. The polypeptide is Endonuclease V (Nocardia farcinica (strain IFM 10152)).